The chain runs to 367 residues: Nodulation protein NolF (367 aa).

It belongs to the membrane fusion protein (MFP) (TC 8.A.1) family.

Its function is as follows. Involved in the production of Medicago-specific nodulation signal molecule. The protein is Nodulation protein NolF (nolF) of Rhizobium meliloti (strain 1021) (Ensifer meliloti).